The primary structure comprises 249 residues: Selenoprotein BthD (249 aa).

Residues 1–22 are disordered; that stretch reads MPPKRNKKAEAPIAERDAGEEL. The segment covering 8–19 has biased composition (basic and acidic residues); that stretch reads KAEAPIAERDAG. The cysteinyl-selenocysteine (Cys-Sec); redox-active cross-link spans 34–37; that stretch reads CRSU. A non-standard amino acid (selenocysteine) is located at residue Sec-37. Residues 122–249 form a disordered region; sequence QQESKEQTNT…EATAGAKRRR (128 aa). Position 147 is a phosphoserine (Ser-147). Residues 175–198 are compositionally biased toward basic and acidic residues; sequence EQKSEEEPTQVDSKEAKQSKELVK. Residues 199–210 show a composition bias toward basic residues; it reads TKRQPKAQKKQA.

As to expression, expressed in the developing salivary gland at late stages of embryogenesis. Also expressed in brain, neuroblast and wing disk.

Its subcellular location is the cytoplasm. The protein localises to the secreted. In terms of biological role, may be involved in a redox-related process. Required for survival and specifically for salivary gland morphogenesis. This is Selenoprotein BthD (BthD) from Drosophila melanogaster (Fruit fly).